We begin with the raw amino-acid sequence, 718 residues long: Putative aminodeoxychorismate synthase (718 aa).

Residues 9–203 (QILLIDCYDS…LSLADTPNIQ (195 aa)) enclose the Glutamine amidotransferase type-1 domain. Cys-88 acts as the Nucleophile in catalysis. Active-site residues include His-177 and Glu-179. Residues 266 to 718 (FLDSAKKPGR…NLKNKKRSCK (453 aa)) are PABB component.

It in the C-terminal section; belongs to the anthranilate synthase component I family.

It is found in the cytoplasm. The protein localises to the nucleus. The enzyme catalyses chorismate + L-glutamine = 4-amino-4-deoxychorismate + L-glutamate. It functions in the pathway cofactor biosynthesis; tetrahydrofolate biosynthesis; 4-aminobenzoate from chorismate: step 1/2. Catalyzes the biosynthesis of 4-amino-4-deoxychorismate (ADC) from chorismate and glutamine. Required for the synthesis of 4-aminobenzoate (PABA), an important component in tetrahydrofolate biosynthesis. The chain is Putative aminodeoxychorismate synthase from Schizosaccharomyces pombe (strain 972 / ATCC 24843) (Fission yeast).